Reading from the N-terminus, the 451-residue chain is Tryptophan biosynthesis protein TrpCF (451 aa).

Residues methionine 1 to aspartate 256 form an indole-3-glycerol phosphate synthase region. Positions asparagine 257–phenylalanine 451 are N-(5'-phosphoribosyl)anthranilate isomerase.

In the N-terminal section; belongs to the TrpC family. It in the C-terminal section; belongs to the TrpF family. Monomer.

The catalysed reaction is N-(5-phospho-beta-D-ribosyl)anthranilate = 1-(2-carboxyphenylamino)-1-deoxy-D-ribulose 5-phosphate. It carries out the reaction 1-(2-carboxyphenylamino)-1-deoxy-D-ribulose 5-phosphate + H(+) = (1S,2R)-1-C-(indol-3-yl)glycerol 3-phosphate + CO2 + H2O. Its pathway is amino-acid biosynthesis; L-tryptophan biosynthesis; L-tryptophan from chorismate: step 3/5. It functions in the pathway amino-acid biosynthesis; L-tryptophan biosynthesis; L-tryptophan from chorismate: step 4/5. Functionally, bifunctional enzyme that catalyzes two sequential steps of tryptophan biosynthetic pathway. The first reaction is catalyzed by the isomerase, coded by the TrpF domain; the second reaction is catalyzed by the synthase, coded by the TrpC domain. This chain is Tryptophan biosynthesis protein TrpCF (trpC), found in Buchnera aphidicola subsp. Schizaphis graminum (strain Sg).